We begin with the raw amino-acid sequence, 449 residues long: Bifunctional protein GlmU (449 aa).

Residues 1 to 226 form a pyrophosphorylase region; that stretch reads MNNIHAIILA…KFEVLGVNDK (226 aa). UDP-N-acetyl-alpha-D-glucosamine is bound by residues 9–12, Lys-23, Gln-73, 78–79, 100–102, Gly-137, Glu-151, Asn-166, and Asn-224; these read LAAG, GT, and YGD. Asp-102 lines the Mg(2+) pocket. Position 224 (Asn-224) interacts with Mg(2+). Positions 227-247 are linker; it reads VQLAELERLFQKDQAIQFMKQ. The tract at residues 248-449 is N-acetyltransferase; the sequence is GLGLKDPTRF…QKNLKYRSKK (202 aa). UDP-N-acetyl-alpha-D-glucosamine is bound by residues Arg-330 and Lys-348. His-360 acts as the Proton acceptor in catalysis. UDP-N-acetyl-alpha-D-glucosamine-binding residues include Tyr-363 and Asn-374. Acetyl-CoA contacts are provided by residues Ala-377, 383–384, Ser-402, Ala-420, and Arg-437; that span reads NY.

The protein in the N-terminal section; belongs to the N-acetylglucosamine-1-phosphate uridyltransferase family. This sequence in the C-terminal section; belongs to the transferase hexapeptide repeat family. In terms of assembly, homotrimer. Mg(2+) is required as a cofactor.

Its subcellular location is the cytoplasm. It catalyses the reaction alpha-D-glucosamine 1-phosphate + acetyl-CoA = N-acetyl-alpha-D-glucosamine 1-phosphate + CoA + H(+). It carries out the reaction N-acetyl-alpha-D-glucosamine 1-phosphate + UTP + H(+) = UDP-N-acetyl-alpha-D-glucosamine + diphosphate. Its pathway is nucleotide-sugar biosynthesis; UDP-N-acetyl-alpha-D-glucosamine biosynthesis; N-acetyl-alpha-D-glucosamine 1-phosphate from alpha-D-glucosamine 6-phosphate (route II): step 2/2. It functions in the pathway nucleotide-sugar biosynthesis; UDP-N-acetyl-alpha-D-glucosamine biosynthesis; UDP-N-acetyl-alpha-D-glucosamine from N-acetyl-alpha-D-glucosamine 1-phosphate: step 1/1. The protein operates within bacterial outer membrane biogenesis; LPS lipid A biosynthesis. Catalyzes the last two sequential reactions in the de novo biosynthetic pathway for UDP-N-acetylglucosamine (UDP-GlcNAc). The C-terminal domain catalyzes the transfer of acetyl group from acetyl coenzyme A to glucosamine-1-phosphate (GlcN-1-P) to produce N-acetylglucosamine-1-phosphate (GlcNAc-1-P), which is converted into UDP-GlcNAc by the transfer of uridine 5-monophosphate (from uridine 5-triphosphate), a reaction catalyzed by the N-terminal domain. The polypeptide is Bifunctional protein GlmU (Vesicomyosocius okutanii subsp. Calyptogena okutanii (strain HA)).